The chain runs to 1224 residues: A disintegrin and metalloproteinase with thrombospondin motifs 16 (1224 aa).

The first 24 residues, 1 to 24 (MKPRARGWRGLAALWMLLAQVAEQ), serve as a signal peptide directing secretion. Residues 25-279 (APACAMGPAA…EYKSCLRHKR (255 aa)) constitute a propeptide that is removed on maturation. A disordered region spans residues 31–53 (GPAAAAPGSPSVPRPPPPAERPG). The span at 40–50 (PSVPRPPPPAE) shows a compositional bias: pro residues. A glycan (N-linked (GlcNAc...) asparagine) is linked at N156. Positions 247–254 (HFCGRRKK) match the Cysteine switch motif. C249 contacts Zn(2+). The Peptidase M12B domain occupies 290–495 (LNVETLVVVD…AQAICLADQP (206 aa)). The N-linked (GlcNAc...) asparagine glycan is linked to N310. Disulfide bonds link C366/C417, C392/C399, C411/C490, C450/C474, C518/C543, C529/C550, C538/C569, C563/C574, C598/C635, C602/C640, and C613/C625. H433 contributes to the Zn(2+) binding site. E434 is a catalytic residue. H437 and H443 together coordinate Zn(2+). Positions 496–585 (KPVKEYKYPE…KYGDEGPKPT (90 aa)) constitute a Disintegrin domain. The TSP type-1 1 domain occupies 586-641 (HGHWSDWSSWSPCSRTCGGGVSHRSRLCTNPKPSHGGKFCEGSTRTLKLCNSQKCP). Residues N741, N780, N835, N905, and N935 are each glycosylated (N-linked (GlcNAc...) asparagine). Residues 747–873 (IHRGLYTKHH…KQPPAQPSYT (127 aa)) are spacer. TSP type-1 domains lie at 874-922 (WAIV…LVPC), 927-987 (CPPS…QSCP), 988-1048 (PAWS…QRCH), 1051-1115 (KKLQ…LPCP), and 1127-1181 (RGSW…HFCP). 3 disulfide bridges follow: C939–C981, C943–C986, and C954–C970. Residues 1186–1223 (KDAFCKDYFHWCYLVPQHGMCSHKFYGKQCCKTCSKSN) form the PLAC domain.

Zn(2+) is required as a cofactor. The precursor is cleaved by a furin endopeptidase. Post-translationally, glycosylated. Can be O-fucosylated by POFUT2 on a serine or a threonine residue found within the consensus sequence C1-X(2)-(S/T)-C2-G of the TSP type-1 repeat domains where C1 and C2 are the first and second cysteine residue of the repeat, respectively. Fucosylated repeats can then be further glycosylated by the addition of a beta-1,3-glucose residue by the glucosyltransferase, B3GALTL. Fucosylation mediates the efficient secretion of ADAMTS family members. Can also be C-glycosylated with one or two mannose molecules on tryptophan residues within the consensus sequence W-X-X-W of the TPRs, and N-glycosylated. These other glycosylations can also facilitate secretion. As to expression, expressed in fetal lung and kidney and in adult prostate and ovary.

The protein resides in the secreted. The protein localises to the extracellular space. Its subcellular location is the extracellular matrix. This chain is A disintegrin and metalloproteinase with thrombospondin motifs 16 (ADAMTS16), found in Homo sapiens (Human).